The following is a 264-amino-acid chain: tRNA pseudouridine synthase A (264 aa).

Aspartate 51 functions as the Nucleophile in the catalytic mechanism. Tyrosine 109 is a binding site for substrate.

This sequence belongs to the tRNA pseudouridine synthase TruA family. Homodimer.

It carries out the reaction uridine(38/39/40) in tRNA = pseudouridine(38/39/40) in tRNA. Formation of pseudouridine at positions 38, 39 and 40 in the anticodon stem and loop of transfer RNAs. The protein is tRNA pseudouridine synthase A of Pseudoalteromonas translucida (strain TAC 125).